The sequence spans 101 residues: Thioredoxin 1 (101 aa).

The Thioredoxin domain occupies 2–101 (AQTLDDLIRT…MRQEVLKAIG (100 aa)). The cysteines at positions 25 and 28 are disulfide-linked.

This sequence belongs to the thioredoxin family.

Participates in various redox reactions through the reversible oxidation of its active center dithiol to a disulfide and catalyzes dithiol-disulfide exchange reactions. This is Thioredoxin 1 (trx1) from Chlorobaculum tepidum (strain ATCC 49652 / DSM 12025 / NBRC 103806 / TLS) (Chlorobium tepidum).